Consider the following 431-residue polypeptide: Ribosome assembly protein SQT1 (431 aa).

WD repeat units follow at residues 63 to 102, 107 to 146, 149 to 192, 199 to 243, 309 to 348, and 350 to 387; these read KHTDSVFAIGHHPNLPLVCTGGGDNLAHLWTSHSQPPKFA, GYGESVISCSFTSEGGFLVTADMSGKVLVHMGQKGGAQWK, SQMQ…GSLE, VHQQ…QLFK, ELDASIESISWSSKFSLMAIGLVCGEILLYDTSAWRVRHK, and VLEDSVTKLMFDNDDLFASCINGKVYQFNARTGQEKFV.

Interacts strongly with QSR1. Part of an oligomeric protein complex that is loosely associated with ribosomes.

Functionally, may be involved in the late step of 60S ribosomal subunit assembly or modification in the cytoplasm. The polypeptide is Ribosome assembly protein SQT1 (SQT1) (Saccharomyces cerevisiae (strain ATCC 204508 / S288c) (Baker's yeast)).